Here is a 134-residue protein sequence, read N- to C-terminus: Methylmalonyl-CoA decarboxylase subunit gamma (134 aa).

Low complexity predominate over residues 28–38; the sequence is APAARPAAAPA. A disordered region spans residues 28–67; the sequence is APAARPAAAPAPAAPKPAAAPAPAPAPKTTAAGAGAGANT. A compositionally biased stretch (pro residues) spans 39 to 53; the sequence is PAAPKPAAAPAPAPA. Over residues 54–67 the composition is skewed to low complexity; sequence PKTTAAGAGAGANT. A Biotinyl-binding domain is found at 58-134; the sequence is AAGAGAGANT…NAGDILVVLS (77 aa). Position 100 is an N6-biotinyllysine (K100).

In terms of assembly, the methylmalonyl-CoA decarboxylase is composed of four subunits: the carboxyltransferase alpha subunit (MmdA), the tunnel beta subunit (MmdB), the biotin-containing gamma subunit (MmdC) and the delta subunit (MmdD). The cofactor is biotin.

It localises to the cell membrane. The enzyme catalyses (S)-methylmalonyl-CoA + Na(+)(in) + H(+)(out) = propanoyl-CoA + Na(+)(out) + CO2. Biotin-containing subunit of the sodium ion pump methylmalonyl-CoA decarboxylase, which converts the chemical energy of a decarboxylation reaction into an electrochemical gradient of Na(+) ions across the cytoplasmic membrane, thereby creating a sodium ion motive force that is used for ATP synthesis. This chain is Methylmalonyl-CoA decarboxylase subunit gamma, found in Propionigenium modestum.